Consider the following 66-residue polypeptide: Large ribosomal subunit protein bL32 (66 aa).

Belongs to the bacterial ribosomal protein bL32 family.

The protein is Large ribosomal subunit protein bL32 of Rickettsia bellii (strain OSU 85-389).